Reading from the N-terminus, the 321-residue chain is RGPKNWCKVHPCWTTCGSQMRQSPININTNQTIYKRYPRLKVENVHKRVIATIRNNGHAPYFEVHEKFDDEIVLRNVPERPRRKEYNFAQLHVQLGRDEKEGSEHSIDNKFKPMEAQMVFYDKDYEDVLEAKSKKNGLVVISVMIEVYGRSKEHDDCACDGETCTVRYVRKLSKLMEKYYEKVRRYPLVSINPHFLTFIKLPRKCWYNKCGRTPSPDFIEKKCEKEEPETRPFFVFEGITPLDVIPYDTNRFYTYAGSLTSPPCYETVQWVVFKCPIKVSSKAFRMLQLVQDSHLDPLEKLGVRRPLQTNKNVIVYRNHLK.

The Alpha-carbonic anhydrase domain occupies 1–319 (RGPKNWCKVH…NKNVIVYRNH (319 aa)). The active-site Proton acceptor is the His58.

It belongs to the alpha-carbonic anhydrase family. As to expression, component of the organic matrix of calcified shell layers like nacre and prisms.

The protein localises to the secreted. In Mytilus californianus (California mussel), this protein is Nacrein-like protein.